A 504-amino-acid chain; its full sequence is Nuclear hormone receptor family member nhr-80 (504 aa).

The segment at residues 27–103 is a DNA-binding region (nuclear receptor); it reads STRCLICSAQ…NGMKPGGVQP (77 aa). 2 NR C4-type zinc fingers span residues 30–50 and 66–86; these read CLIC…CSAC and CITG…CRSC. Positions 177 to 192 are enriched in low complexity; that stretch reads SSSTSFSASTTTNYST. Residues 177–199 are disordered; sequence SSSTSFSASTTTNYSTPGPSPMA. One can recognise an NR LBD domain in the interval 214-466; it reads EEMKLGERRR…KLVLQLLNLD (253 aa). The interval 455 to 466 is AF-2; it reads LDKLVLQLLNLD.

This sequence belongs to the nuclear hormone receptor family. In terms of assembly, interacts with nuclear hormone receptor nhr-49; the interaction is direct. Expressed in the intestine and in some head and tail neurons, as well as the ventral nerve cord.

It is found in the nucleus. Transcription factor. Binds to regulatory elements and regulates transcription of target genes, including acyltransferase dgat-2. As part of a lysosome-to-nucleus retrograde lipid signaling pathway, acts as a direct nuclear receptor of oleoylethanolamide (OEA) and, acting in concert with nuclear hormone receptor nhr-49, activates the transcription of genes promoting longevity and mitochondrial beta-oxidation. Required to modulate expression of delta-9 fatty acid desaturases, thereby regulating lipid metabolism; in some contexts, acting in concert with nhr-49. Involved in modulation of lipid metabolism in response to the citrate-induced mitochondrial unfolded protein response (mtUPR), acting downstream of transcription factor dve-1 and ubiquitin-like protein 5. Plays a role in modulating mitochondrial morphology and function. Involved in positively modulating life-span in a germline-dependent manner, acting in concert with nuclear hormone receptor daf-12. Plays a role in transgenerational lipid accumulation in response to a high-fat diet. The sequence is that of Nuclear hormone receptor family member nhr-80 from Caenorhabditis elegans.